Reading from the N-terminus, the 650-residue chain is Acetyl-coenzyme A synthetase (650 aa).

CoA-binding positions include 191–194 (RGGR), Thr311, and Asn335. Residues 387–389 (GEP), 411–416 (DTWWQT), Asp501, and Arg516 contribute to the ATP site. Ser524 contacts CoA. Arg527 lines the ATP pocket. The Mg(2+) site is built by Val538, His540, and Ile543. Position 585 (Arg585) interacts with CoA. Position 610 is an N6-acetyllysine (Lys610).

It belongs to the ATP-dependent AMP-binding enzyme family. The cofactor is Mg(2+). Acetylated. Deacetylation by the SIR2-homolog deacetylase activates the enzyme.

It catalyses the reaction acetate + ATP + CoA = acetyl-CoA + AMP + diphosphate. Its function is as follows. Catalyzes the conversion of acetate into acetyl-CoA (AcCoA), an essential intermediate at the junction of anabolic and catabolic pathways. AcsA undergoes a two-step reaction. In the first half reaction, AcsA combines acetate with ATP to form acetyl-adenylate (AcAMP) intermediate. In the second half reaction, it can then transfer the acetyl group from AcAMP to the sulfhydryl group of CoA, forming the product AcCoA. This chain is Acetyl-coenzyme A synthetase, found in Vibrio parahaemolyticus serotype O3:K6 (strain RIMD 2210633).